A 416-amino-acid chain; its full sequence is Glutamyl-tRNA reductase (416 aa).

Residues 50–53 (TCNR), Ser109, 114–116 (EPQ), and Gln120 each bind substrate. Cys51 acts as the Nucleophile in catalysis. 189–194 (GAGEMI) is a binding site for NADP(+).

The protein belongs to the glutamyl-tRNA reductase family. Homodimer.

The catalysed reaction is (S)-4-amino-5-oxopentanoate + tRNA(Glu) + NADP(+) = L-glutamyl-tRNA(Glu) + NADPH + H(+). It functions in the pathway porphyrin-containing compound metabolism; protoporphyrin-IX biosynthesis; 5-aminolevulinate from L-glutamyl-tRNA(Glu): step 1/2. In terms of biological role, catalyzes the NADPH-dependent reduction of glutamyl-tRNA(Glu) to glutamate 1-semialdehyde (GSA). The sequence is that of Glutamyl-tRNA reductase from Vesicomyosocius okutanii subsp. Calyptogena okutanii (strain HA).